A 282-amino-acid chain; its full sequence is Transcription factor MYB1 (282 aa).

HTH myb-type domains follow at residues 9–61 (KEGL…LNYL) and 62–116 (RPDI…SKKV). 2 DNA-binding regions (H-T-H motif) span residues 37–61 (WRDLPRRAGLKRCGKSCRLRWLNYL) and 89–112 (WSLIAGRLPGRTDNEIKNYWNTYL). The interval 258–282 (EDDWKQNGGKDELMGGGNGGPSSVS) is disordered. Residues 260–270 (DWKQNGGKDEL) show a composition bias toward basic and acidic residues. The span at 271–282 (MGGGNGGPSSVS) shows a compositional bias: gly residues.

The protein resides in the nucleus. Its function is as follows. Transcription activator involved in the spatiotemporal regulation of flavonoid biosynthesis specifically in the corms of Montbretia. Activates the promoters of enzymes involved in the biosynthesis of the flavonol kaempferol and the flavonol-glycoside kaempferol-rhamnoside. The protein is Transcription factor MYB1 of Crocosmia x crocosmiiflora (Montbretia).